A 116-amino-acid polypeptide reads, in one-letter code: Large ribosomal subunit protein bL17 (116 aa).

The protein belongs to the bacterial ribosomal protein bL17 family. Part of the 50S ribosomal subunit. Contacts protein L32.

This chain is Large ribosomal subunit protein bL17, found in Chloroflexus aurantiacus (strain ATCC 29366 / DSM 635 / J-10-fl).